Reading from the N-terminus, the 567-residue chain is Geranylgeranyl transferase type-2 subunit alpha (567 aa).

PFTA repeat units lie at residues 44–78, 88–122, 124–158, 159–193, 207–241, and 363–397; these read LDES…HLET, LVKA…RLPE, NWAR…QAAV, APAE…QLHP, VLLK…RAEP, and VLQS…ALDP. A Phosphoserine modification is found at serine 98. LRR repeat units follow at residues 442–463, 464–486, 487–508, 509–530, and 534–555; these read DVRV…EQLL, LVTH…AALR, CLEV…ANLP, RLQE…QPLV, and RLVL…QERL.

The protein belongs to the protein prenyltransferase subunit alpha family. Heterotrimer composed of RABGGTA, RABGGTB and CHM; within this trimer, RABGGTA and RABGGTB form the catalytic component B, while CHM (component A) mediates peptide substrate binding. The Rab GGTase dimer (RGGT) interacts with CHM (component A) prior to Rab protein binding; the association is stabilized by geranylgeranyl pyrophosphate (GGpp). The CHM:RGGT:Rab complex is destabilized by GGpp. Interacts with non-phosphorylated form of RAB8A; phosphorylation of RAB8A at 'Thr-72' disrupts this interaction. As to expression, most abundant in the heart, brain, spleen and liver. Less in the lung, muscle, kidney and testis; in these tissues less abundant than the beta subunit.

The enzyme catalyses geranylgeranyl diphosphate + L-cysteinyl-[protein] = S-geranylgeranyl-L-cysteinyl-[protein] + diphosphate. Its activity is regulated as follows. The enzymatic reaction requires the aid of a Rab escort protein (also called component A), such as CHM. In terms of biological role, catalyzes the transfer of a geranylgeranyl moiety from geranylgeranyl diphosphate to both cysteines of Rab proteins with the C-terminal sequence -XXCC, -XCXC and -CCXX, such as RAB1A, RAB3A, RAB5A and RAB7A. The protein is Geranylgeranyl transferase type-2 subunit alpha (Rabggta) of Rattus norvegicus (Rat).